The following is a 632-amino-acid chain: 1-deoxy-D-xylulose-5-phosphate synthase (632 aa).

Thiamine diphosphate is bound by residues histidine 79 and 120–122 (GHA). Aspartate 152 is a Mg(2+) binding site. Residues 153-154 (GS), asparagine 181, phenylalanine 293, and glutamate 377 contribute to the thiamine diphosphate site. A Mg(2+)-binding site is contributed by asparagine 181.

Belongs to the transketolase family. DXPS subfamily. In terms of assembly, homodimer. Mg(2+) serves as cofactor. The cofactor is thiamine diphosphate.

The catalysed reaction is D-glyceraldehyde 3-phosphate + pyruvate + H(+) = 1-deoxy-D-xylulose 5-phosphate + CO2. It participates in metabolic intermediate biosynthesis; 1-deoxy-D-xylulose 5-phosphate biosynthesis; 1-deoxy-D-xylulose 5-phosphate from D-glyceraldehyde 3-phosphate and pyruvate: step 1/1. Functionally, catalyzes the acyloin condensation reaction between C atoms 2 and 3 of pyruvate and glyceraldehyde 3-phosphate to yield 1-deoxy-D-xylulose-5-phosphate (DXP). This chain is 1-deoxy-D-xylulose-5-phosphate synthase, found in Phocaeicola vulgatus (strain ATCC 8482 / DSM 1447 / JCM 5826 / CCUG 4940 / NBRC 14291 / NCTC 11154) (Bacteroides vulgatus).